Reading from the N-terminus, the 82-residue chain is Cytochrome b559 subunit alpha (82 aa).

Residues 22–36 (VIHSITIPALFIAGW) form a helical membrane-spanning segment. His-24 provides a ligand contact to heme.

Belongs to the PsbE/PsbF family. Heterodimer of an alpha subunit and a beta subunit. PSII is composed of 1 copy each of membrane proteins PsbA, PsbB, PsbC, PsbD, PsbE, PsbF, PsbH, PsbI, PsbJ, PsbK, PsbL, PsbM, PsbT, PsbX, PsbY, PsbZ, Psb30/Ycf12, peripheral proteins PsbO, CyanoQ (PsbQ), PsbU, PsbV and a large number of cofactors. It forms dimeric complexes. Heme b is required as a cofactor.

The protein resides in the cellular thylakoid membrane. Its function is as follows. This b-type cytochrome is tightly associated with the reaction center of photosystem II (PSII). PSII is a light-driven water:plastoquinone oxidoreductase that uses light energy to abstract electrons from H(2)O, generating O(2) and a proton gradient subsequently used for ATP formation. It consists of a core antenna complex that captures photons, and an electron transfer chain that converts photonic excitation into a charge separation. In Trichodesmium erythraeum (strain IMS101), this protein is Cytochrome b559 subunit alpha.